An 864-amino-acid polypeptide reads, in one-letter code: Ribosome biogenesis protein ERB1 (864 aa).

Basic and acidic residues predominate over residues 1-52 (MAVDKGRRPVPPERRAQGRKRAEPGDVTIRETRTRPVHTPEPEPELLAKDGI). Disordered regions lie at residues 1–153 (MAVD…VKEG) and 191–231 (ESRN…STED). Residues 53 to 71 (LELEDDDDNDDDDDDDDDD) show a composition bias toward acidic residues. Over residues 72–83 (KSNHHDGAPKNE) the composition is skewed to basic and acidic residues. A compositionally biased stretch (acidic residues) spans 100 to 135 (DDGDEDEEEDDEDEDEDASDDEAFDSDDLENWDEEA). WD repeat units lie at residues 509–549 (AHAP…CVAT), 559–599 (ADRS…KTMY), 694–732 (NSAMAVQCVCFHPSRPWLFVATQRYVRVYDLVQQSLVKT), 735–774 (PGVRWISSLDVHPSGDHVIIGSYDRRVLWFDLDLSERPYK), 778–817 (YHSRAVRAVAYHPRFPLFASAADDGTVHVYHGTVYSDLLQ), and 833–864 (QDALGVLSIAWHPTLPWLVSAGADGDARLWTP).

It belongs to the WD repeat BOP1/ERB1 family. Component of the NOP7 complex, composed of ERB1, NOP7 and YTM1. The complex is held together by ERB1, which interacts with NOP7 via its N-terminal domain and with YTM1 via a high-affinity interaction between the seven-bladed beta-propeller domains of the 2 proteins. The NOP7 complex associates with the 66S pre-ribosome.

It is found in the nucleus. The protein resides in the nucleolus. The protein localises to the nucleoplasm. Its function is as follows. Component of the NOP7 complex, which is required for maturation of the 25S and 5.8S ribosomal RNAs and formation of the 60S ribosome. This Malassezia globosa (strain ATCC MYA-4612 / CBS 7966) (Dandruff-associated fungus) protein is Ribosome biogenesis protein ERB1.